Here is a 186-residue protein sequence, read N- to C-terminus: TATA box-binding protein-like 1 (186 aa).

This sequence belongs to the TBP family.

The protein resides in the cytoplasm. The protein localises to the nucleus. Functionally, part of a specialized transcription system that mediates the transcription of most ribosomal proteins through the 5'-TCT-3' motif which is a core promoter element at these genes. Seems to also mediate the transcription of NF1. Does not bind the TATA box. Members of the TBP family are differentially required to regulate transcription and development during early embryogenesis. This is TATA box-binding protein-like 1 from Danio rerio (Zebrafish).